The chain runs to 484 residues: Cobyric acid synthase (484 aa).

Residues 251–438 form the GATase cobBQ-type domain; sequence ALKIAVPVLP…LHGLFGSDAY (188 aa). Cys-333 functions as the Nucleophile in the catalytic mechanism. Residue His-430 is part of the active site.

It belongs to the CobB/CobQ family. CobQ subfamily.

The protein operates within cofactor biosynthesis; adenosylcobalamin biosynthesis. Catalyzes amidations at positions B, D, E, and G on adenosylcobyrinic A,C-diamide. NH(2) groups are provided by glutamine, and one molecule of ATP is hydrogenolyzed for each amidation. The protein is Cobyric acid synthase of Rhizobium leguminosarum bv. trifolii (strain WSM2304).